We begin with the raw amino-acid sequence, 488 residues long: Catalase (488 aa).

The interval Met1 to Ala24 is disordered. Positions Leu7–Thr23 are enriched in polar residues. Residues His55 and Asn128 contribute to the active site. Tyr338 provides a ligand contact to heme.

Belongs to the catalase family. It depends on heme as a cofactor.

The protein resides in the cytoplasm. It carries out the reaction 2 H2O2 = O2 + 2 H2O. Its function is as follows. Decomposes hydrogen peroxide into water and oxygen; serves to protect cells from the toxic effects of hydrogen peroxide. The sequence is that of Catalase (kat) from Listeria innocua serovar 6a (strain ATCC BAA-680 / CLIP 11262).